Consider the following 329-residue polypeptide: Phosphate acyltransferase (329 aa).

Belongs to the PlsX family. In terms of assembly, homodimer. Probably interacts with PlsY.

Its subcellular location is the cytoplasm. The enzyme catalyses a fatty acyl-[ACP] + phosphate = an acyl phosphate + holo-[ACP]. It functions in the pathway lipid metabolism; phospholipid metabolism. Catalyzes the reversible formation of acyl-phosphate (acyl-PO(4)) from acyl-[acyl-carrier-protein] (acyl-ACP). This enzyme utilizes acyl-ACP as fatty acyl donor, but not acyl-CoA. The polypeptide is Phosphate acyltransferase (Campylobacter concisus (strain 13826)).